A 107-amino-acid chain; its full sequence is U1-lycotoxin-Ls1b (107 aa).

The signal sequence occupies residues 1-20 (MMKVLVVVALLVTLISYSSS). The propeptide occupies 21 to 41 (EGIDDLEADELSSLMANEQTR). 4 cysteine pairs are disulfide-bonded: C44/C59, C51/C68, C58/C86, and C70/C84.

The protein belongs to the neurotoxin 19 (CSTX) family. 04 (U1-Lctx) subfamily. In terms of tissue distribution, expressed by the venom gland.

It is found in the secreted. This is U1-lycotoxin-Ls1b from Lycosa singoriensis (Wolf spider).